We begin with the raw amino-acid sequence, 141 residues long: Small ribosomal subunit protein uS12 (141 aa).

The disordered stretch occupies residues 118-141 (TGVDKRRQQRSAYGAKRPKADKKK).

The protein belongs to the universal ribosomal protein uS12 family. As to quaternary structure, part of the 30S ribosomal subunit. Contacts proteins S8 and S17. May interact with IF1 in the 30S initiation complex.

Its function is as follows. With S4 and S5 plays an important role in translational accuracy. Functionally, interacts with and stabilizes bases of the 16S rRNA that are involved in tRNA selection in the A site and with the mRNA backbone. Located at the interface of the 30S and 50S subunits, it traverses the body of the 30S subunit contacting proteins on the other side and probably holding the rRNA structure together. The combined cluster of proteins S8, S12 and S17 appears to hold together the shoulder and platform of the 30S subunit. This Mycoplasmoides gallisepticum (strain R(low / passage 15 / clone 2)) (Mycoplasma gallisepticum) protein is Small ribosomal subunit protein uS12.